The chain runs to 324 residues: 3'-5' exoribonuclease YhaM (324 aa).

In terms of domain architecture, HD spans 163-279 (HVVSMLELAK…LHYIDNLDAK (117 aa)).

Belongs to the YhaM family.

Shows a 3'-5' exoribonuclease activity. The sequence is that of 3'-5' exoribonuclease YhaM from Geobacillus sp. (strain WCH70).